Consider the following 451-residue polypeptide: Adenylyltransferase and sulfurtransferase MOCS3-2 (451 aa).

The tract at residues 42–62 (GEDSDEAEESSNDMPTPQTKL) is disordered. Residues 43 to 52 (EDSDEAEESS) show a composition bias toward acidic residues. Phosphothreonine is present on Thr60. Residues Gly99, Asp120, 127–131 (SNLHR), Lys144, and 188–189 (DN) each bind ATP. Cys229 and Cys232 together coordinate Zn(2+). The active-site Glycyl thioester intermediate; for adenylyltransferase activity is Cys246. 2 residues coordinate Zn(2+): Cys304 and Cys307. The 97-residue stretch at 353–449 (QSQPHLLLDV…WTGSVDATFP (97 aa)) folds into the Rhodanese domain. Cys408 serves as the catalytic Cysteine persulfide intermediate; for sulfurtransferase activity.

This sequence in the N-terminal section; belongs to the HesA/MoeB/ThiF family. UBA4 subfamily. Requires Zn(2+) as cofactor.

The protein localises to the cytoplasm. It catalyses the reaction [molybdopterin-synthase sulfur-carrier protein]-C-terminal Gly-Gly + ATP + H(+) = [molybdopterin-synthase sulfur-carrier protein]-C-terminal Gly-Gly-AMP + diphosphate. It carries out the reaction [molybdopterin-synthase sulfur-carrier protein]-C-terminal Gly-Gly-AMP + S-sulfanyl-L-cysteinyl-[cysteine desulfurase] + AH2 = [molybdopterin-synthase sulfur-carrier protein]-C-terminal-Gly-aminoethanethioate + L-cysteinyl-[cysteine desulfurase] + A + AMP + 2 H(+). The protein operates within tRNA modification; 5-methoxycarbonylmethyl-2-thiouridine-tRNA biosynthesis. It participates in cofactor biosynthesis; molybdopterin biosynthesis. Its function is as follows. Plays a central role in 2-thiolation of mcm(5)S(2)U at tRNA wobble positions of cytosolic tRNA(Lys), tRNA(Glu) and tRNA(Gln). Also essential during biosynthesis of the molybdenum cofactor. Acts by mediating the C-terminal thiocarboxylation of sulfur carriers URM1 and MOCS2A. Its N-terminus first activates URM1 and MOCS2A as acyl-adenylates (-COAMP), then the persulfide sulfur on the catalytic cysteine is transferred to URM1 and MOCS2A to form thiocarboxylation (-COSH) of their C-terminus. The reaction probably involves hydrogen sulfide that is generated from the persulfide intermediate and that acts as a nucleophile towards URM1 and MOCS2A. Subsequently, a transient disulfide bond is formed. Does not use thiosulfate as sulfur donor; NFS1 probably acting as a sulfur donor for thiocarboxylation reactions. The chain is Adenylyltransferase and sulfurtransferase MOCS3-2 from Drosophila pseudoobscura pseudoobscura (Fruit fly).